We begin with the raw amino-acid sequence, 892 residues long: DNA mismatch repair protein MutS (892 aa).

An ATP-binding site is contributed by 607–614; it reads GPNMSGKS. Residues 833–854 form a disordered region; sequence EESQLSFFGGEQSPKKQDKPVL. The segment covering 845–854 has biased composition (basic and acidic residues); sequence SPKKQDKPVL.

This sequence belongs to the DNA mismatch repair MutS family.

Functionally, this protein is involved in the repair of mismatches in DNA. It is possible that it carries out the mismatch recognition step. This protein has a weak ATPase activity. The polypeptide is DNA mismatch repair protein MutS (Bacillus cereus (strain Q1)).